The following is a 483-amino-acid chain: tRNA sulfurtransferase (483 aa).

The THUMP domain maps to proline 62–arginine 166. ATP contacts are provided by residues leucine 184–isoleucine 185, lysine 266, glycine 288, and glutamine 297. A disulfide bond links cysteine 345 and cysteine 457. The Rhodanese domain maps to leucine 405–proline 483. Cysteine 457 serves as the catalytic Cysteine persulfide intermediate.

This sequence belongs to the ThiI family.

It localises to the cytoplasm. The catalysed reaction is [ThiI sulfur-carrier protein]-S-sulfanyl-L-cysteine + a uridine in tRNA + 2 reduced [2Fe-2S]-[ferredoxin] + ATP + H(+) = [ThiI sulfur-carrier protein]-L-cysteine + a 4-thiouridine in tRNA + 2 oxidized [2Fe-2S]-[ferredoxin] + AMP + diphosphate. It catalyses the reaction [ThiS sulfur-carrier protein]-C-terminal Gly-Gly-AMP + S-sulfanyl-L-cysteinyl-[cysteine desulfurase] + AH2 = [ThiS sulfur-carrier protein]-C-terminal-Gly-aminoethanethioate + L-cysteinyl-[cysteine desulfurase] + A + AMP + 2 H(+). Its pathway is cofactor biosynthesis; thiamine diphosphate biosynthesis. Functionally, catalyzes the ATP-dependent transfer of a sulfur to tRNA to produce 4-thiouridine in position 8 of tRNAs, which functions as a near-UV photosensor. Also catalyzes the transfer of sulfur to the sulfur carrier protein ThiS, forming ThiS-thiocarboxylate. This is a step in the synthesis of thiazole, in the thiamine biosynthesis pathway. The sulfur is donated as persulfide by IscS. This chain is tRNA sulfurtransferase, found in Yersinia pseudotuberculosis serotype O:1b (strain IP 31758).